Consider the following 108-residue polypeptide: Mitochondrial pyruvate carrier 3 (108 aa).

Helical transmembrane passes span 19–35, 51–67, and 74–90; these read IHFWAPTFKWGISIANI, IVITGTGLVWSRYSTVI, and LFSVSLGMAVTGIYQLT.

It belongs to the mitochondrial pyruvate carrier (MPC) (TC 2.A.105) family. Abundant in leaf and particularly in the guard cells.

It is found in the mitochondrion. The protein localises to the mitochondrion inner membrane. Functionally, mediates the uptake of pyruvate into mitochondria. Negatively regulates ABA-induced guard cell signaling and mediates drought stress responses. The sequence is that of Mitochondrial pyruvate carrier 3 from Arabidopsis thaliana (Mouse-ear cress).